We begin with the raw amino-acid sequence, 590 residues long: Muscarinic acetylcholine receptor M3 (590 aa).

At 1–67 (MTLHNNNTTS…DPLGGHTIWQ (67 aa)) the chain is on the extracellular side. N-linked (GlcNAc...) asparagine glycans are attached at residues asparagine 6, asparagine 7, asparagine 15, asparagine 41, asparagine 48, and asparagine 53. Residues 68–91 (VVFIAFLTGILALVTIIGNILVIV) traverse the membrane as a helical segment. The Cytoplasmic portion of the chain corresponds to 92 to 104 (AFKVNKQLKTVNN). The helical transmembrane segment at 105–130 (YFLLSLACADLIIGVISMNLFTTYII) threads the bilayer. The Extracellular portion of the chain corresponds to 131–142 (MNRWALGNLACD). A disulfide bridge connects residues cysteine 141 and cysteine 221. The chain crosses the membrane as a helical span at residues 143–164 (LWLSIDYVASNASVMNLLVISF). Residues 165–184 (DRYFSITRPLTYRAKRTTKR) lie on the Cytoplasmic side of the membrane. A helical transmembrane segment spans residues 185-206 (AGVMIGLAWVISFILWAPAILF). The Extracellular portion of the chain corresponds to 207-229 (WQYFVGKRTVPPGECFIQFLSEP). A helical transmembrane segment spans residues 230 to 252 (TITFGTAIAAFYMPVTIMTILYW). Topologically, residues 253–491 (RIYKETEKRT…SLIKEKKAAQ (239 aa)) are cytoplasmic. The Basolateral sorting signal signature appears at 275–281 (AEAENFV). A disordered region spans residues 324-357 (AEQMDQDHSSSDSWNNNDAAASLENSASSDEEDI). The span at 334–345 (SDSWNNNDAAAS) shows a compositional bias: low complexity. A Phosphoserine modification is found at serine 385. The chain crosses the membrane as a helical span at residues 492-514 (TLSAILLAFIITWTPYNIMVLVN). Topologically, residues 515-526 (TFCDSCIPKTYW) are extracellular. An intrachain disulfide couples cysteine 517 to cysteine 520. The chain crosses the membrane as a helical span at residues 527–546 (NLGYWLCYINSTVNPVCYAL). Residues 547–590 (CNKTFRTTFKMLLLCQCDKRKRRKQQYQQRQSVIFHKRVPEQAL) are Cytoplasmic-facing.

This sequence belongs to the G-protein coupled receptor 1 family. Muscarinic acetylcholine receptor subfamily. CHRM3 sub-subfamily. In terms of assembly, homodimer; the dimers can form tetramers. Interacts with NALCN. Interacts with TMEM147.

The protein resides in the cell membrane. The protein localises to the postsynaptic cell membrane. Its subcellular location is the basolateral cell membrane. It is found in the endoplasmic reticulum membrane. Its function is as follows. The muscarinic acetylcholine receptor mediates various cellular responses, including inhibition of adenylate cyclase, breakdown of phosphoinositides and modulation of potassium channels through the action of G proteins. Primary transducing effect is Pi turnover. The chain is Muscarinic acetylcholine receptor M3 (CHRM3) from Sus scrofa (Pig).